Here is a 460-residue protein sequence, read N- to C-terminus: MRSLWVEKRKDDPVKTQMYYAKQGIITQEMEYVAKIEKLSPELIRSEIARGRLIIPANVNHTTLEPMAIGIAATCKINANIGSSAIASDVQGEVEKMQVSQHYKADTAMDLSTGGDLDEIRKAVIASSKIPIGTVPIYQILHDVGNKIEDLSIEVMLEVLERQAKQGVSYFTIHAGFLLETMPKIAKRKMGIVSRGGSLMAAWMMHYHRENPFYTAYDEILDICARYDVALSLGDSLRPGCLADASDDAQLGELKVLGELTLRAWEKNVQVMIEGPGHVPLNQIERNMKLQRELCHEAPFYILGPLVTDIAAGYDHISSAIGAAVGGWHGASMLCYVTPKEHLGLPNANDVREGIIAYKIAAHAADIARGRKGARDIDDEMSDARYRFDWNRQFELALDSERAREYHDETLPQDVFKEAEFCSMCGPKFCSYKITQSIMDNPEAIEQIAREVKEREALGA.

Substrate-binding positions include Asn-80, Met-109, Tyr-138, His-174, 194–196, 235–238, and Glu-274; these read SRG and DSLR. Residue His-278 participates in Zn(2+) binding. Substrate is bound at residue Tyr-301. Residue His-342 coordinates Zn(2+). The [4Fe-4S] cluster site is built by Cys-422, Cys-425, and Cys-430.

This sequence belongs to the ThiC family. In terms of assembly, homodimer. [4Fe-4S] cluster is required as a cofactor.

The enzyme catalyses 5-amino-1-(5-phospho-beta-D-ribosyl)imidazole + S-adenosyl-L-methionine = 4-amino-2-methyl-5-(phosphooxymethyl)pyrimidine + CO + 5'-deoxyadenosine + formate + L-methionine + 3 H(+). It participates in cofactor biosynthesis; thiamine diphosphate biosynthesis. Functionally, catalyzes the synthesis of the hydroxymethylpyrimidine phosphate (HMP-P) moiety of thiamine from aminoimidazole ribotide (AIR) in a radical S-adenosyl-L-methionine (SAM)-dependent reaction. This Sulfurimonas denitrificans (strain ATCC 33889 / DSM 1251) (Thiomicrospira denitrificans (strain ATCC 33889 / DSM 1251)) protein is Phosphomethylpyrimidine synthase.